Consider the following 220-residue polypeptide: Probable pterin-4-alpha-carbinolamine dehydratase, chloroplastic (220 aa).

The N-terminal 50 residues, 1 to 50 (MAATSSSPPCNISASSLLLRQPSRSILKVFGLLPPVSRNNRKLGRLTVTR), are a transit peptide targeting the chloroplast.

The protein belongs to the pterin-4-alpha-carbinolamine dehydratase family. Interacts with SDIR1. Interacts with AIRP2. Ubiquitinated by SDIR1. Ubiquitination leads to its subsequent degradation, thus controlling abscisic acid (ABA) signaling. Ubiquitinated by AIRP2. Ubiquitination leads to its subsequent degradation, thus controlling abscisic acid (ABA) signaling during drought stress.

It is found in the plastid. The protein resides in the chloroplast. It localises to the cell membrane. The protein localises to the nucleus. It carries out the reaction (4aS,6R)-4a-hydroxy-L-erythro-5,6,7,8-tetrahydrobiopterin = (6R)-L-erythro-6,7-dihydrobiopterin + H2O. Its function is as follows. Involved in tetrahydrobiopterin biosynthesis. Interacts with and acts downstream of the E3 ubiquitin-protein ligase SDIR1 in abscisic acid (ABA) and salt stress signaling. Regulates the expression of the bZIP transcription factor ABI5, which mediates responses to ABA during seed germination and salt stress. The SDIR1-ATP1/SDIRIP1 complex plays an important role in ABA signaling through the ubiquitination pathway. Acts downstream of AIRP2 in regulation of ABA signaling during drought stress. This is Probable pterin-4-alpha-carbinolamine dehydratase, chloroplastic from Arabidopsis thaliana (Mouse-ear cress).